The following is a 229-amino-acid chain: Transmembrane emp24 domain-containing protein 5 (229 aa).

An N-terminal signal peptide occupies residues 1-27 (MGDKIWLPFPVLLLAALPPVLLPGAAG). Residues 28–196 (FTPSLDSDFT…IQESNFDRVN (169 aa)) are Lumenal-facing. Positions 45–126 (KECFYQPMPL…EKVIFFELIL (82 aa)) constitute a GOLD domain. The chain crosses the membrane as a helical span at residues 197–217 (FWSMVNLVVMVVVSAIQVYML). The Cytoplasmic portion of the chain corresponds to 218 to 229 (KSLFEDKRKSRT).

The protein belongs to the EMP24/GP25L family. As to quaternary structure, interacts with TMED9 and TMED10.

Its subcellular location is the endoplasmic reticulum membrane. It is found in the golgi apparatus. The protein resides in the cis-Golgi network membrane. It localises to the endoplasmic reticulum-Golgi intermediate compartment membrane. Functionally, potential role in vesicular protein trafficking, mainly in the early secretory pathway. Required for the maintenance of the Golgi apparatus; involved in protein exchange between Golgi stacks during assembly. Probably not required for COPI-vesicle-mediated retrograde transport. This chain is Transmembrane emp24 domain-containing protein 5 (TMED5), found in Homo sapiens (Human).